We begin with the raw amino-acid sequence, 624 residues long: 1-deoxy-D-xylulose-5-phosphate synthase (624 aa).

Residues H74 and 115 to 117 (GHS) contribute to the thiamine diphosphate site. D146 serves as a coordination point for Mg(2+). Thiamine diphosphate-binding positions include 147-148 (GA), N175, Y286, and E367. N175 lines the Mg(2+) pocket.

It belongs to the transketolase family. DXPS subfamily. In terms of assembly, homodimer. It depends on Mg(2+) as a cofactor. The cofactor is thiamine diphosphate.

It carries out the reaction D-glyceraldehyde 3-phosphate + pyruvate + H(+) = 1-deoxy-D-xylulose 5-phosphate + CO2. Its pathway is metabolic intermediate biosynthesis; 1-deoxy-D-xylulose 5-phosphate biosynthesis; 1-deoxy-D-xylulose 5-phosphate from D-glyceraldehyde 3-phosphate and pyruvate: step 1/1. Functionally, catalyzes the acyloin condensation reaction between C atoms 2 and 3 of pyruvate and glyceraldehyde 3-phosphate to yield 1-deoxy-D-xylulose-5-phosphate (DXP). The protein is 1-deoxy-D-xylulose-5-phosphate synthase of Alkaliphilus oremlandii (strain OhILAs) (Clostridium oremlandii (strain OhILAs)).